The primary structure comprises 183 residues: Translation initiation factor IF-3 (183 aa).

It belongs to the IF-3 family. Monomer.

The protein resides in the cytoplasm. Its function is as follows. IF-3 binds to the 30S ribosomal subunit and shifts the equilibrium between 70S ribosomes and their 50S and 30S subunits in favor of the free subunits, thus enhancing the availability of 30S subunits on which protein synthesis initiation begins. The chain is Translation initiation factor IF-3 from Pseudomonas aeruginosa (strain ATCC 15692 / DSM 22644 / CIP 104116 / JCM 14847 / LMG 12228 / 1C / PRS 101 / PAO1).